The following is a 457-amino-acid chain: 5' exonuclease Apollo (457 aa).

Residues 425–437 (ELPKQYLLTPLNA) carry the TBM motif.

This sequence belongs to the DNA repair metallo-beta-lactamase (DRMBL) family. Interacts with TERF2; the interaction is direct.

The protein localises to the chromosome. Its subcellular location is the telomere. It is found in the nucleus. The enzyme catalyses a beta-lactam + H2O = a substituted beta-amino acid. Its function is as follows. 5'-3' exonuclease that plays a central role in telomere maintenance and protection during S-phase. Participates in the protection of telomeres against non-homologous end-joining (NHEJ)-mediated repair, thereby ensuring that telomeres do not fuse. Plays a key role in telomeric loop (T loop) formation by being recruited by TERF2 at the leading end telomeres and by processing leading-end telomeres immediately after their replication via its exonuclease activity: generates 3' single-stranded overhang at the leading end telomeres avoiding blunt leading-end telomeres that are vulnerable to end-joining reactions and expose the telomere end in a manner that activates the DNA repair pathways. May be required for DNA interstrand cross-link repair. Possesses beta-lactamase activity, catalyzing the hydrolysis of penicillin G and nitrocefin. Exhibits no activity towards other beta-lactam antibiotic classes including cephalosporins (cefotaxime) and carbapenems (imipenem). The protein is 5' exonuclease Apollo (DCLRE1B) of Gallus gallus (Chicken).